The following is a 308-amino-acid chain: Pantothenate kinase (308 aa).

Residue 91–98 participates in ATP binding; it reads GSVAVGKS.

It belongs to the prokaryotic pantothenate kinase family.

The protein localises to the cytoplasm. The enzyme catalyses (R)-pantothenate + ATP = (R)-4'-phosphopantothenate + ADP + H(+). The protein operates within cofactor biosynthesis; coenzyme A biosynthesis; CoA from (R)-pantothenate: step 1/5. The sequence is that of Pantothenate kinase from Lacticaseibacillus paracasei (strain ATCC 334 / BCRC 17002 / CCUG 31169 / CIP 107868 / KCTC 3260 / NRRL B-441) (Lactobacillus paracasei).